Reading from the N-terminus, the 502-residue chain is Cytochrome P450 81D1 (502 aa).

The helical transmembrane segment at 6–26 (IRVVLYSIFSLIFLIISFKFL) threads the bilayer. Cysteine 440 serves as a coordination point for heme.

Belongs to the cytochrome P450 family. The cofactor is heme.

The protein localises to the membrane. The protein is Cytochrome P450 81D1 (CYP81D1) of Arabidopsis thaliana (Mouse-ear cress).